Here is a 249-residue protein sequence, read N- to C-terminus: Ubiquinone biosynthesis O-methyltransferase (249 aa).

The interval Met-1 to Asp-21 is disordered. S-adenosyl-L-methionine is bound by residues Arg-52, Gly-72, Asp-93, and Met-137.

It belongs to the methyltransferase superfamily. UbiG/COQ3 family.

The enzyme catalyses a 3-demethylubiquinol + S-adenosyl-L-methionine = a ubiquinol + S-adenosyl-L-homocysteine + H(+). The catalysed reaction is a 3-(all-trans-polyprenyl)benzene-1,2-diol + S-adenosyl-L-methionine = a 2-methoxy-6-(all-trans-polyprenyl)phenol + S-adenosyl-L-homocysteine + H(+). It participates in cofactor biosynthesis; ubiquinone biosynthesis. Functionally, O-methyltransferase that catalyzes the 2 O-methylation steps in the ubiquinone biosynthetic pathway. The protein is Ubiquinone biosynthesis O-methyltransferase of Sodalis glossinidius (strain morsitans).